Here is a 224-residue protein sequence, read N- to C-terminus: Endonuclease NucS (224 aa).

The protein belongs to the NucS endonuclease family.

The protein localises to the cytoplasm. In terms of biological role, cleaves both 3' and 5' ssDNA extremities of branched DNA structures. This is Endonuclease NucS from Rhodococcus jostii (strain RHA1).